Reading from the N-terminus, the 98-residue chain is UPF0473 protein lp_2273 (98 aa).

It belongs to the UPF0473 family.

The protein is UPF0473 protein lp_2273 of Lactiplantibacillus plantarum (strain ATCC BAA-793 / NCIMB 8826 / WCFS1) (Lactobacillus plantarum).